A 125-amino-acid chain; its full sequence is Small ribosomal subunit protein uS13 (125 aa).

Positions 93–125 (RKGLPVRGQRTKTNARTRKGPKRTVAGKKKAGR) are disordered.

This sequence belongs to the universal ribosomal protein uS13 family. As to quaternary structure, part of the 30S ribosomal subunit. Forms a loose heterodimer with protein S19. Forms two bridges to the 50S subunit in the 70S ribosome.

In terms of biological role, located at the top of the head of the 30S subunit, it contacts several helices of the 16S rRNA. In the 70S ribosome it contacts the 23S rRNA (bridge B1a) and protein L5 of the 50S subunit (bridge B1b), connecting the 2 subunits; these bridges are implicated in subunit movement. Contacts the tRNAs in the A and P-sites. The polypeptide is Small ribosomal subunit protein uS13 (Arthrobacter sp. (strain FB24)).